A 308-amino-acid chain; its full sequence is Transaldolase (308 aa).

Lys-125 acts as the Schiff-base intermediate with substrate in catalysis.

Belongs to the transaldolase family. Type 1 subfamily. In terms of assembly, homodimer.

The protein resides in the cytoplasm. It catalyses the reaction D-sedoheptulose 7-phosphate + D-glyceraldehyde 3-phosphate = D-erythrose 4-phosphate + beta-D-fructose 6-phosphate. The protein operates within carbohydrate degradation; pentose phosphate pathway; D-glyceraldehyde 3-phosphate and beta-D-fructose 6-phosphate from D-ribose 5-phosphate and D-xylulose 5-phosphate (non-oxidative stage): step 2/3. Functionally, transaldolase is important for the balance of metabolites in the pentose-phosphate pathway. This Stutzerimonas stutzeri (strain A1501) (Pseudomonas stutzeri) protein is Transaldolase.